We begin with the raw amino-acid sequence, 183 residues long: Putative ribosomal N-acetyltransferase YdaF (183 aa).

In terms of domain architecture, N-acetyltransferase spans 10 to 176 (ITIRLLEPKD…HDLVYYSLLK (167 aa)).

This sequence belongs to the acetyltransferase family. As to quaternary structure, homohexamer, and homodimer.

Functionally, putative N-acetyltransferase. May act on ribosomal proteins (Potential). This Bacillus subtilis (strain 168) protein is Putative ribosomal N-acetyltransferase YdaF (ydaF).